The primary structure comprises 90 residues: Co-chaperonin GroES (90 aa).

The protein belongs to the GroES chaperonin family. As to quaternary structure, heptamer of 7 subunits arranged in a ring. Interacts with the chaperonin GroEL.

The protein resides in the cytoplasm. Its function is as follows. Together with the chaperonin GroEL, plays an essential role in assisting protein folding. The GroEL-GroES system forms a nano-cage that allows encapsulation of the non-native substrate proteins and provides a physical environment optimized to promote and accelerate protein folding. GroES binds to the apical surface of the GroEL ring, thereby capping the opening of the GroEL channel. The chain is Co-chaperonin GroES from Fusobacterium nucleatum subsp. nucleatum (strain ATCC 25586 / DSM 15643 / BCRC 10681 / CIP 101130 / JCM 8532 / KCTC 2640 / LMG 13131 / VPI 4355).